A 431-amino-acid polypeptide reads, in one-letter code: Adenylosuccinate synthetase (431 aa).

Residues 12-18 (GDEGKGK) and 40-42 (GHT) contribute to the GTP site. Residue aspartate 13 is the Proton acceptor of the active site. Mg(2+) contacts are provided by aspartate 13 and glycine 40. IMP is bound by residues 13-16 (DEGK), 38-41 (NAGH), threonine 128, arginine 142, glutamine 223, threonine 238, and arginine 301. Histidine 41 functions as the Proton donor in the catalytic mechanism. A substrate-binding site is contributed by 297–303 (TVTGRPR). GTP is bound by residues arginine 303, 329–331 (SID), and 411–413 (SVG).

The protein belongs to the adenylosuccinate synthetase family. As to quaternary structure, homodimer. It depends on Mg(2+) as a cofactor.

It localises to the cytoplasm. It carries out the reaction IMP + L-aspartate + GTP = N(6)-(1,2-dicarboxyethyl)-AMP + GDP + phosphate + 2 H(+). The protein operates within purine metabolism; AMP biosynthesis via de novo pathway; AMP from IMP: step 1/2. Functionally, plays an important role in the de novo pathway of purine nucleotide biosynthesis. Catalyzes the first committed step in the biosynthesis of AMP from IMP. This Lacticaseibacillus casei (strain BL23) (Lactobacillus casei) protein is Adenylosuccinate synthetase.